A 146-amino-acid polypeptide reads, in one-letter code: Hemoglobin subunit beta (146 aa).

Residues 2 to 146 (HWSAEEKQLI…VAHALARKYH (145 aa)) form the Globin domain. His-63 and His-92 together coordinate heme b.

The protein belongs to the globin family. In terms of assembly, heterotetramer of two alpha chains and two beta chains. Red blood cells.

In terms of biological role, involved in oxygen transport from the lung to the various peripheral tissues. This chain is Hemoglobin subunit beta (HBB), found in Anser anser anser (Western greylag goose).